A 241-amino-acid chain; its full sequence is Outer membrane protein A (241 aa).

5 consecutive transmembrane segments (beta stranded) span residues 1-8, 13-21, 46-55, 60-67, and 86-94; these read LTAKLSYP, LDIYTRLGG, PVFAGGVEYA, IATRLEYQ, and MLSVGVSYR. A run of 4 repeats spans residues 105–106, 107–108, 109–110, and 111–112. The tract at residues 105–112 is 4 X 2 AA tandem repeats of A-P; sequence APAPAPAP. Residues 114–241 form the OmpA-like domain; sequence VQTKHFTLKS…RRVEIEVKGV (128 aa). C215 and C227 form a disulfide bridge.

This sequence belongs to the outer membrane OOP (TC 1.B.6) superfamily. OmpA family. Monomer and homodimer.

Its subcellular location is the cell outer membrane. Functionally, with TolR probably plays a role in maintaining the position of the peptidoglycan cell wall in the periplasm. Acts as a porin with low permeability that allows slow penetration of small solutes; an internal gate slows down solute passage. This is Outer membrane protein A from Shimwellia blattae (Escherichia blattae).